The following is a 924-amino-acid chain: Probable dipeptidyl-aminopeptidase B (924 aa).

Residues 1-12 (MPSTYSDDNTLR) are compositionally biased toward polar residues. The interval 1 to 102 (MPSTYSDDNT…RSNQRSSADG (102 aa)) is disordered. Residues 1-111 (MPSTYSDDNT…GQRMDRSLRR (111 aa)) are Cytoplasmic-facing. The span at 14 to 23 (GLDRFRDHSP) shows a compositional bias: basic and acidic residues. Residues 31-43 (SQETDSTVSTTSI) show a composition bias toward polar residues. Basic and acidic residues predominate over residues 47–58 (RIQERLDTKEFP). The span at 87–100 (NASPSSRSNQRSSA) shows a compositional bias: low complexity. The chain crosses the membrane as a helical; Signal-anchor for type II membrane protein span at residues 112–132 (WLFIVSGALVATWVIGLIFFV). The Vacuolar portion of the chain corresponds to 133–924 (SSKAYKPSSS…GMKRRALPTA (792 aa)). N-linked (GlcNAc...) asparagine glycans are attached at residues Asn-231 and Asn-364. Ser-768 (charge relay system) is an active-site residue. N-linked (GlcNAc...) asparagine glycosylation is present at Asn-827. Catalysis depends on charge relay system residues Asp-845 and His-878.

The protein belongs to the peptidase S9B family.

The protein localises to the vacuole membrane. The catalysed reaction is Release of an N-terminal dipeptide, Xaa-Yaa-|-Zaa-, from a polypeptide, preferentially when Yaa is Pro, provided Zaa is neither Pro nor hydroxyproline.. Functionally, type IV dipeptidyl-peptidase which removes N-terminal dipeptides sequentially from polypeptides having unsubstituted N-termini provided that the penultimate residue is proline. In Neurospora crassa (strain ATCC 24698 / 74-OR23-1A / CBS 708.71 / DSM 1257 / FGSC 987), this protein is Probable dipeptidyl-aminopeptidase B (dapB).